The sequence spans 185 residues: MISSNDFRPGVSIELDGAVWRVVEFLHVKPGKGSAFVRTKLKNVQTGNVIERTFRAGETVPQATLEKRTMQHTYKDGEDYVFMDMESYEEARLTPAQVGDRAKYLKEGMEVNIVKWGEQVLEVELPNSVVLEVVQTDPGVKGDTATGGSKPAIVETGAQVMVPLFISVGERIRIDTRSDTYLGRE.

This sequence belongs to the elongation factor P family.

It localises to the cytoplasm. It participates in protein biosynthesis; polypeptide chain elongation. Its function is as follows. Involved in peptide bond synthesis. Stimulates efficient translation and peptide-bond synthesis on native or reconstituted 70S ribosomes in vitro. Probably functions indirectly by altering the affinity of the ribosome for aminoacyl-tRNA, thus increasing their reactivity as acceptors for peptidyl transferase. The chain is Elongation factor P from Thermosynechococcus vestitus (strain NIES-2133 / IAM M-273 / BP-1).